We begin with the raw amino-acid sequence, 370 residues long: tRNA-specific 2-thiouridylase MnmA (370 aa).

Residues A11–S18 and M37 each bind ATP. The tract at residues N99–D101 is interaction with target base in tRNA. The Nucleophile role is filled by C104. C104 and C201 are disulfide-bonded. G129 contributes to the ATP binding site. Positions K151–Q153 are interaction with tRNA. The active-site Cysteine persulfide intermediate is C201. The interaction with tRNA stretch occupies residues R313–Y314.

It belongs to the MnmA/TRMU family. In terms of assembly, interacts with TusE.

It is found in the cytoplasm. The enzyme catalyses S-sulfanyl-L-cysteinyl-[protein] + uridine(34) in tRNA + AH2 + ATP = 2-thiouridine(34) in tRNA + L-cysteinyl-[protein] + A + AMP + diphosphate + H(+). Catalyzes the 2-thiolation of uridine at the wobble position (U34) of tRNA(Lys), tRNA(Glu) and tRNA(Gln), leading to the formation of s(2)U34, the first step of tRNA-mnm(5)s(2)U34 synthesis. Sulfur is provided by IscS, via a sulfur-relay system. Binds ATP and its substrate tRNAs. The sequence is that of tRNA-specific 2-thiouridylase MnmA from Buchnera aphidicola subsp. Baizongia pistaciae (strain Bp).